Reading from the N-terminus, the 148-residue chain is Large ribosomal subunit protein bL28c (148 aa).

A chloroplast-targeting transit peptide spans 1–71; that stretch reads MAASGMLISN…PLKPSLQPVA (71 aa).

In terms of assembly, component of the chloroplast large ribosomal subunit (LSU). Mature 70S chloroplast ribosomes of higher plants consist of a small (30S) and a large (50S) subunit. The 30S small subunit contains 1 molecule of ribosomal RNA (16S rRNA) and 24 different proteins. The 50S large subunit contains 3 rRNA molecules (23S, 5S and 4.5S rRNA) and 33 different proteins.

Its subcellular location is the plastid. The protein localises to the chloroplast. Component of the chloroplast ribosome (chloro-ribosome), a dedicated translation machinery responsible for the synthesis of chloroplast genome-encoded proteins, including proteins of the transcription and translation machinery and components of the photosynthetic apparatus. The sequence is that of Large ribosomal subunit protein bL28c (RPL28) from Spinacia oleracea (Spinach).